The primary structure comprises 883 residues: Lethal(3)malignant brain tumor-like protein 3 (883 aa).

An interaction with RBPJ. Required for transcription repressor activity on Notch target genes region spans residues M1–W64. A compositionally biased stretch (basic and acidic residues) spans H146–R156. Residues H146–G223 are disordered. Acidic residues-rich tracts occupy residues D157–D166 and D185–M194. MBT repeat units lie at residues W232 to P332, F340 to P439, and F448 to P543. The CCHHC-type; degenerate zinc finger occupies L549–E593. Residues I595 to Q768 form a disordered region. Residues K616–P662 show a composition bias toward basic and acidic residues. K638 participates in a covalent cross-link: Glycyl lysine isopeptide (Lys-Gly) (interchain with G-Cter in SUMO2). 2 stretches are compositionally biased toward low complexity: residues T663 to Q742 and Q749 to Q768. The SAM domain occupies W811–A875.

In terms of assembly, interacts with RNF2. Interacts (via SAM domain) with SAMD1 (via SAM domain); the interaction mediates L3MBTL3 binding to chromatin. Interacts with RBPJ; the interaction is required for L3MBTL3 localization to chromatin and is impaired the Notch-derived peptides containing the intracellular domain (NICD). Interacts (via SAM domain) with KDM1A. Interacts with DCAF5. Interacts with DNMT1. Interacts with E2F1. Interacts with SOX2. Interacts with SFMBT1. As to expression, detected in hematopoietic progenitor cells in fetal liver. Detected in adult bone marrow, heart, brain, spleen, lung, liver, kidney and testis.

The protein resides in the nucleus. Functionally, is a negative regulator of Notch target genes expression, required for RBPJ-mediated transcriptional repression. It recruits KDM1A to Notch-responsive elements and promotes KDM1A-mediated H3K4me demethylation. Involved in the regulation of ubiquitin-dependent degradation of a set of methylated non-histone proteins, including SOX2. It acts as an adapter recruiting the CRL4-DCAF5 E3 ubiquitin ligase complex to methylated target proteins. Also involved in the regulation of ubiquitin-dependent degradation of methylated DNMT1 and E2F1. Required for normal maturation of myeloid progenitor cells. This chain is Lethal(3)malignant brain tumor-like protein 3, found in Mus musculus (Mouse).